Here is a 264-residue protein sequence, read N- to C-terminus: Glutamate racemase (264 aa).

Substrate-binding positions include 11-12 and 43-44; these read DS and YG. The active-site Proton donor/acceptor is Cys74. Position 75 to 76 (75 to 76) interacts with substrate; it reads NT. Cys193 (proton donor/acceptor) is an active-site residue. 194 to 195 contributes to the substrate binding site; it reads TH.

Belongs to the aspartate/glutamate racemases family.

It carries out the reaction L-glutamate = D-glutamate. The protein operates within cell wall biogenesis; peptidoglycan biosynthesis. Its function is as follows. Provides the (R)-glutamate required for cell wall biosynthesis. The chain is Glutamate racemase from Bifidobacterium longum (strain DJO10A).